The following is a 148-amino-acid chain: Augurin (148 aa).

The N-terminal stretch at 1–31 is a signal peptide; the sequence is MSTSSARPAVLALAGLALLLLLCLGPDGISG. 2 propeptides span residues 32–70 and 133–148; these read NKLK…RAKR and SRES…YNDY.

This sequence belongs to the augurin family. In terms of tissue distribution, expressed in the intermediate lobe of pituitary, glomerular layer of adrenal cortex, choroid plexus and atrioventricular node of the heart. Expressed in the brain with high expression in the choroid plexus and the epithelial lining of the central canal and expression in the gray matter of the spinal cord (at protein level).

It localises to the secreted. Its subcellular location is the cytoplasm. The protein resides in the apical cell membrane. In terms of biological role, probable hormone that may attenuate cell proliferation and induce senescence of oligodendrocyte and neural precursor cells in the central nervous system. ECRG4-induced senescence is characterized by G1 arrest, RB1 dephosphorylation and accelerated CCND1 and CCND3 proteasomal degradation. This is Augurin from Mus musculus (Mouse).